Consider the following 78-residue polypeptide: UPF0291 protein ABC2165 (78 aa).

The segment at 56–78 is disordered; that stretch reads AKGNDVTPQKLKDSKAQKHKRLH.

It belongs to the UPF0291 family.

Its subcellular location is the cytoplasm. This is UPF0291 protein ABC2165 from Shouchella clausii (strain KSM-K16) (Alkalihalobacillus clausii).